Here is a 368-residue protein sequence, read N- to C-terminus: High affinity iron permease 1 (368 aa).

7 consecutive transmembrane segments (helical) span residues 8–28 (VPIF…ISVL), 50–70 (VWIG…AFIA), 86–106 (IWEG…GLAM), 142–162 (AFFV…VVFI), 173–193 (SIPI…FLIY), 204–224 (FFVF…AKGV), and 287–307 (SIIS…FSYF). The segment at 346–368 (DKESDEEANNHPKEKIESDAIKA) is disordered. A compositionally biased stretch (basic and acidic residues) spans 353-368 (ANNHPKEKIESDAIKA).

This sequence belongs to the oxidase-dependent Fe transporter (OFeT) (TC 9.A.10.1) family.

It is found in the cell membrane. Functionally, high affinity iron permease required for iron uptake in iron-depleted environments. Required for full virulence in mice. The sequence is that of High affinity iron permease 1 from Rhizopus delemar (strain RA 99-880 / ATCC MYA-4621 / FGSC 9543 / NRRL 43880) (Mucormycosis agent).